We begin with the raw amino-acid sequence, 90 residues long: Small ribosomal subunit protein bS16 (90 aa).

Belongs to the bacterial ribosomal protein bS16 family.

This chain is Small ribosomal subunit protein bS16, found in Streptococcus pneumoniae (strain Hungary19A-6).